Consider the following 438-residue polypeptide: tRNA-dihydrouridine(16/17) synthase [NAD(P)(+)]-like (438 aa).

Residues 23–25 (PMV) and Gln79 contribute to the FMN site. The active-site Proton donor is Cys108. FMN contacts are provided by residues Lys147, His175, 208–210 (NGN), and 232–233 (AE). The disordered stretch occupies residues 343 to 387 (GPKEGSKENSSGRSKRALEEEEGSMEGLSKNKLKKQLRNPHKTFD). The segment covering 373–383 (NKLKKQLRNPH) has biased composition (basic residues).

Belongs to the Dus family. Dus1 subfamily. Requires FMN as cofactor.

The protein localises to the cytoplasm. Its subcellular location is the nucleus. It carries out the reaction 5,6-dihydrouridine(16) in tRNA + NADP(+) = uridine(16) in tRNA + NADPH + H(+). The catalysed reaction is 5,6-dihydrouridine(16) in tRNA + NAD(+) = uridine(16) in tRNA + NADH + H(+). It catalyses the reaction 5,6-dihydrouridine(17) in tRNA + NAD(+) = uridine(17) in tRNA + NADH + H(+). The enzyme catalyses 5,6-dihydrouridine(17) in tRNA + NADP(+) = uridine(17) in tRNA + NADPH + H(+). Its function is as follows. Catalyzes the synthesis of dihydrouridine, a modified base found in the D-loop of most tRNAs. Specifically modifies U16 and U17 in cytoplasmic tRNAs. Affects the level of some mature tRNA and thereby the total cellular translation. The chain is tRNA-dihydrouridine(16/17) synthase [NAD(P)(+)]-like (Dus1l) from Rattus norvegicus (Rat).